The sequence spans 253 residues: uncharacterized protein (253 aa).

Residues Gly45, 66 to 67, 94 to 95, and Arg110 contribute to the S-adenosyl-L-methionine site; these read DA and AE.

This sequence belongs to the methyltransferase superfamily.

This is an uncharacterized protein from Bacillus subtilis (strain 168).